The primary structure comprises 251 residues: Low molecular mass lipoprotein PBMHPC-21 (251 aa).

Residues 1 to 16 (MKFVVVFASCVLAVSA) form the signal peptide.

Belongs to the 30 kDa lipoprotein family.

The protein resides in the secreted. This is Low molecular mass lipoprotein PBMHPC-21 from Bombyx mori (Silk moth).